The primary structure comprises 1083 residues: MSWDDAIDGVDRDTPGGRMPRAWNVAARLRAANDDIVHAQQADGLPAYAELHCLSDFSFLRGASSAEQLFARAQQCGYSALAITDECSLAGIVRGLEASRATGVRLIVGSEFTLVDGTRFVLLVENAHGYPQLCGLITTARRAASKGAYRLDRAEVQAQFRDVAPGVFALWLPGAQPQAEQGAWLQQVFGERAFLAVELHREQDDVARLHVLQALAQQLGMTALASGDVHMAQRRERIVQDTLTAIRHTLPLAECGAHLFRNGERHLRTRRALGNIYPDALLQATVELAQRCTFDISKISYTYPRELVPEGHTPTSYLRQLTEAGIRRRWPGGITAKVREDIEKELALIALKKYEAFFLTVQDVVRFAREQNILCQGRGSSANSAVCYALGITAVNPDETRLLMARFLSEKRDEPPDIDVDFEHERREEVLQYVYSKYGRERAALAATVICYRGKSAVRDVAKAFGLPPDQIALLANCYGWGNGETPMDQRIEEAGFDLANPLINKILAVTEHLRDHPRHLSQHVGGFVISDEPLSLLVPVENAAMANRTIIQWDKDDLETMKLLKVDCLALGMLTCIRKTLDLVRGHRGRNYSIATLPGGDAPTYKMIQRADTVGVFQIESRAQMAMLPRLKPAAFYDLVIEVAIVRPGPIQGDMVHPYLRRRQGREEVNYPSPAVEDILKPTLGVPLFQEQVMELLMHAADYSEDEADNLRRSMAAWRRGGDMEQHRTRVRERMQGKGYASSFIDQIFEQIKGFGSYGFPQSHAASFAKLVYASCWLKRHEPAAFACGLLNAQPMGFYSASQIVQDARRGSPERERVEVLPVDVLHSDWDNTLVGGRPWRSAADPGEQPAIRLGMRQVAGLSQVVAQRIVAARTQRAFADIGDLCLRAALDEKARLALAEAGALQGMVGNRNAARWAMAGVEARCPLLPGSPEERPVEFEAPRAGEEILADYRSVGLSLRQHPMALLRPQMRQRRILGLRELQGRRHGSGVHVAGLVTQRQRPATAKGTIFVTLEDEQGMINVIVWSHLALRRRRALLESRLLAVRGRWERVDGVEHLIAGDLYDLSNLLGDMQLPSRDFH.

It belongs to the DNA polymerase type-C family. DnaE2 subfamily.

Its subcellular location is the cytoplasm. The catalysed reaction is DNA(n) + a 2'-deoxyribonucleoside 5'-triphosphate = DNA(n+1) + diphosphate. In terms of biological role, DNA polymerase involved in damage-induced mutagenesis and translesion synthesis (TLS). It is not the major replicative DNA polymerase. This chain is Error-prone DNA polymerase, found in Xanthomonas axonopodis pv. citri (strain 306).